Consider the following 301-residue polypeptide: Phosphatidylglycerol--prolipoprotein diacylglyceryl transferase (301 aa).

7 helical membrane passes run 17 to 37, 59 to 79, 97 to 117, 129 to 149, 203 to 223, 230 to 250, and 257 to 277; these read LAVR…IVVG, MLFY…VLFY, GGMS…LFAW, FVAP…FING, PSQL…LWLF, VGAA…TVEF, and FLGL…PMII. A 1,2-diacyl-sn-glycero-3-phospho-(1'-sn-glycerol) is bound at residue arginine 142.

The protein belongs to the Lgt family.

It is found in the cell inner membrane. The catalysed reaction is L-cysteinyl-[prolipoprotein] + a 1,2-diacyl-sn-glycero-3-phospho-(1'-sn-glycerol) = an S-1,2-diacyl-sn-glyceryl-L-cysteinyl-[prolipoprotein] + sn-glycerol 1-phosphate + H(+). The protein operates within protein modification; lipoprotein biosynthesis (diacylglyceryl transfer). Catalyzes the transfer of the diacylglyceryl group from phosphatidylglycerol to the sulfhydryl group of the N-terminal cysteine of a prolipoprotein, the first step in the formation of mature lipoproteins. The chain is Phosphatidylglycerol--prolipoprotein diacylglyceryl transferase from Paraburkholderia phymatum (strain DSM 17167 / CIP 108236 / LMG 21445 / STM815) (Burkholderia phymatum).